Here is a 659-residue protein sequence, read N- to C-terminus: Probable acyl-coenzyme A oxidase acox-1.5 (659 aa).

FAD contacts are provided by residues 148 to 151 (YAQT), 156 to 157 (GT), and G190. Residues 284–287 (KVGY) and R294 contribute to the substrate site. FAD contacts are provided by residues R319 and 339 to 342 (QQYR). Residues H395 and Q403 each contribute to the ATP site. G410 is a binding site for FAD. Substrate is bound at residue 432–433 (YE). The active-site Proton acceptor is E433. E435 lines the FAD pocket. Position 524 to 527 (524 to 527 (KAAR)) interacts with ATP. A Microbody targeting signal motif is present at residues 657-659 (SKL).

The protein belongs to the acyl-CoA oxidase family. Homodimer. It depends on FAD as a cofactor.

It localises to the peroxisome. It functions in the pathway lipid metabolism; peroxisomal fatty acid beta-oxidation. Its activity is regulated as follows. Activated by ATP. ATP binding leads to a conformational change that promotes FAD cofactor binding and enzyme activity. ATP binding likely occurs during acox-1.5 folding and/or dimer formation. Functionally, involved in the first step of peroxisomal beta-oxidation by catalyzing the desaturation of fatty acid-derived side chains. The polypeptide is Probable acyl-coenzyme A oxidase acox-1.5 (Caenorhabditis elegans).